We begin with the raw amino-acid sequence, 258 residues long: Peptidase inhibitor 15 (258 aa).

Residues 1 to 21 (MIEMISISAAFLLSLLCETCG) form the signal peptide. The propeptide occupies 22-60 (LVLPKSSDLAIAASNYTIIKPDLSARLDPVKAPKARRKR). N-linked (GlcNAc...) asparagine glycosylation is found at Asn-36 and Asn-124. Residues 71–211 (VEYHNQVRGK…RRAVYLVCNY (141 aa)) enclose the SCP domain.

Belongs to the CRISP family.

It localises to the secreted. Its function is as follows. Serine protease inhibitor which displays weak inhibitory activity against trypsin. May be involved in facial patterning during embryonic development. This Xenopus laevis (African clawed frog) protein is Peptidase inhibitor 15 (pi15).